A 325-amino-acid polypeptide reads, in one-letter code: Sensor histidine kinase YxdK (325 aa).

At 1-8 (MKLFLRSH) the chain is on the cytoplasmic side. The chain crosses the membrane as a helical span at residues 9 to 29 (AVLILLFLLQGLFVFFYYWFA). Topologically, residues 30–33 (GLHS) are extracellular. The chain crosses the membrane as a helical span at residues 34–54 (FSHLFYILGVQLLILAGYLAY). The Cytoplasmic portion of the chain corresponds to 55–325 (RWYKDRGVYH…SVRFSFLTKM (271 aa)). The Histidine kinase domain maps to 118–325 (QWVHQVKTPL…SVRFSFLTKM (208 aa)). H121 carries the phosphohistidine; by autocatalysis modification.

It is found in the cell membrane. It catalyses the reaction ATP + protein L-histidine = ADP + protein N-phospho-L-histidine.. Probable member of the two-component regulatory system YxdK/YxdJ. May activate YxdJ in response to the antibacterial protein LL-37. This chain is Sensor histidine kinase YxdK (yxdK), found in Bacillus subtilis (strain 168).